We begin with the raw amino-acid sequence, 435 residues long: AMSH-like protease sst2 (435 aa).

Low complexity predominate over residues 162 to 181 (TDLLSPDSQKLSKSSSDLPQ). Residues 162 to 185 (TDLLSPDSQKLSKSSSDLPQFDYP) are disordered. The residue at position 192 (Thr-192) is a Phosphothreonine. In terms of domain architecture, MPN spans 262–392 (TIYLPKLLKK…FRLLDPEGLQ (131 aa)). Residues His-341, His-343, Asp-354, His-356, Cys-397, His-404, and His-406 each contribute to the Zn(2+) site. The short motif at 341 to 354 (HTHPTQTCFMSSVD) is the JAMM motif element.

The protein belongs to the peptidase M67C family. Requires Zn(2+) as cofactor.

The protein resides in the cytoplasm. The protein localises to the endosome. In terms of biological role, zinc metalloprotease that specifically cleaves 'Lys-63'-linked polyubiquitin chains. Does not cleave 'Lys-48'-linked polyubiquitin chains. Plays a role in the multivesicular body (MVB) sorting pathway. Required for ubiquitin-dependent sorting of proteins into the endosome and subsequent trafficking to the vacuole. May regulate MVB sorting through deubiquitination of ubiquitinated ESCRT proteins. The chain is AMSH-like protease sst2 (sst2) from Schizosaccharomyces pombe (strain 972 / ATCC 24843) (Fission yeast).